We begin with the raw amino-acid sequence, 228 residues long: Protein ARV 2 (228 aa).

Helical transmembrane passes span 37 to 57 and 80 to 100; these read EVADEYVECELLIIFIDLILH and LLWKLVLAYLLLDTYRSLLLR. N-linked (GlcNAc...) asparagine glycosylation occurs at N107. 3 helical membrane-spanning segments follow: residues 123–143, 150–170, and 176–196; these read VLSANFAFVFSFAFAAKLMLV, ILLTILISSYVKIFLFAMPVW, and VIFIVDMLVLTSNAVALKVMT.

This sequence belongs to the ARV1 family. As to expression, restricted to tissues in which cells are actively dividing or expanding. Mostly expressed in roots and flowers, and, to a lower extent, in stems and leaves.

The protein localises to the endoplasmic reticulum membrane. Mediator of sterol homeostasis involved in sterol uptake, trafficking and distribution into membranes. Also regulates the sphingolipid metabolism. This chain is Protein ARV 2, found in Arabidopsis thaliana (Mouse-ear cress).